The sequence spans 858 residues: MTTEKSLAAEAENSQHQQQKEEGEGATNSGQQETQLEEASQAAAAEGSDQGEQKLKASNGDTPTHEDLTKNKERTSESRGLSRLLSSFLKRPKSQVSEEEGREVESEKEKGEGGQKEIELGNSLDEDIILKAPIAAPEPELKTDPSLDLHSLSSIETQPAQEEHREDPDSETKEGEGIEECSGTEVKEDPESRAEREPEASQKPVRRHRNMHCKVSLLDDTVYECVVEKHAKGQDLLKRVCEHLNLLEEDYFGLALWDSATSKTWLDSAKEIKKQVRGVPWNFTFNVKFYPPDPAQLTEDITRYYLCLQLRQDIVAGRLPCSFATLALLGSYTIQSELGDYDPELHGMDYVSDFKLAPNQTKELEEKVMELHKSYRSMTPAQADLEFLENAKKLSMYGVDLHKAKDLEGVDIILGVCSSGLLVYKDKLRINRFPWPKVLKISYKRSSFFIKIRPGEQEHYESTIGFKLPSYRAAKKLWKVCVEHHTFFRLTSTDTIPKSKFLALGSKFRYSGRTQAQTRQASALIDRPAPHFERTASKRASRSLDGAAAAESTDRSPRPTSAPAIAQSQVTEGPGAPIKKTPKEAVKVEEKRGEEPAEPAEPEPTEAWKVEKTHTEVTVPTSNGDQTQKLAGKGEDLIRMRKKKRERLDGENIYIRHSNLMLEDLDKSQEEIKKHHASISELKKNFMESVPEPRPSEWDKRLSTHSPFRTLNINGQVPTGDGPPLVKTQTVTISDTANAVKSEIPTKDVPIVHTETKTITYEAAQTEDSNGDLDPGVLLTAQTITSETTSSTTTTQITKTVKGGISETRIEKRIVITGDADIDHDQVLVQAIKEAKEQHPDMSVTKVVVHQETEISEE.

Residues Met-1–Asp-125 form a disordered region. Residue Ser-14 is modified to Phosphoserine. The span at Gln-31–Gln-50 shows a compositional bias: low complexity. Thr-62 carries the post-translational modification Phosphothreonine. Basic and acidic residues predominate over residues Pro-63–Glu-77. Residues Ser-78 to Leu-89 show a composition bias toward low complexity. Phosphoserine occurs at positions 86, 87, 97, 106, 123, 151, 153, and 154. Basic and acidic residues predominate over residues Glu-103–Glu-119. The interval Ile-155–His-208 is disordered. 2 stretches are compositionally biased toward basic and acidic residues: residues Gln-161 to Glu-176 and Glu-185 to Ala-200. The residue at position 192 (Ser-192) is a Phosphoserine. In terms of domain architecture, FERM spans Met-211–Ser-492. Tyr-223 carries the post-translational modification Phosphotyrosine. The residue at position 379 (Thr-379) is a Phosphothreonine. A hydrophilic region spans residues Thr-495–Trp-608. The interval Thr-518 to Asp-636 is disordered. Ser-522, Ser-541, Ser-543, and Ser-556 each carry phosphoserine. Composition is skewed to basic and acidic residues over residues Thr-581 to Glu-595 and Glu-606 to Thr-615. A spectrin--actin-binding region spans residues Lys-609 to Pro-707. The segment covering Glu-616–Lys-629 has biased composition (polar residues). Tyr-654 carries the post-translational modification Phosphotyrosine. Residues Ser-658, Ser-668, Ser-678, Ser-703, and Ser-706 each carry the phosphoserine modification. The C-terminal (CTD) stretch occupies residues Thr-710–Glu-858. 2 positions are modified to phosphothreonine: Thr-730 and Thr-853.

In terms of assembly, binds with a high affinity to glycophorin and with lower affinity to band III protein. Associates with the nuclear mitotic apparatus. Binds calmodulin, CPAP and DLG1. Also found to associate with contractile apparatus and tight junctions. Interacts with NUMA1; this interaction is negatively regulated by CDK1 during metaphase and promotes anaphase-specific localization of NUMA1 in symmetrically dividing cells. Interacts with ATP2B1; regulates small intestinal calcium absorption through regulation of membrane expression of ATP2B1. In terms of processing, O-glycosylated; contains N-acetylglucosamine side chains in the C-terminal domain. Post-translationally, phosphorylated at multiple sites by different protein kinases and each phosphorylation event selectively modulates the protein's functions. Phosphorylation on Tyr-654 reduces the ability of 4.1 to promote the assembly of the spectrin/actin/4.1 ternary complex.

The protein resides in the nucleus. The protein localises to the cytoplasm. Its subcellular location is the cytoskeleton. It localises to the cell cortex. Protein 4.1 is a major structural element of the erythrocyte membrane skeleton. It plays a key role in regulating membrane physical properties of mechanical stability and deformability by stabilizing spectrin-actin interaction. Recruits DLG1 to membranes. Required for dynein-dynactin complex and NUMA1 recruitment at the mitotic cell cortex during anaphase. This is Protein 4.1 from Mus musculus (Mouse).